The primary structure comprises 72 residues: Gene 35 protein (72 aa).

The sequence is that of Gene 35 protein (35) from Mycobacterium phage L5 (Mycobacteriophage L5).